A 427-amino-acid polypeptide reads, in one-letter code: Serine hydroxymethyltransferase (427 aa).

Residues L122 and 126 to 128 contribute to the (6S)-5,6,7,8-tetrahydrofolate site; that span reads GHL. K231 carries the post-translational modification N6-(pyridoxal phosphate)lysine. A (6S)-5,6,7,8-tetrahydrofolate-binding site is contributed by 355–357; that stretch reads SPF.

It belongs to the SHMT family. Homodimer. Requires pyridoxal 5'-phosphate as cofactor.

The protein localises to the cytoplasm. It catalyses the reaction (6R)-5,10-methylene-5,6,7,8-tetrahydrofolate + glycine + H2O = (6S)-5,6,7,8-tetrahydrofolate + L-serine. It functions in the pathway one-carbon metabolism; tetrahydrofolate interconversion. It participates in amino-acid biosynthesis; glycine biosynthesis; glycine from L-serine: step 1/1. Its function is as follows. Catalyzes the reversible interconversion of serine and glycine with tetrahydrofolate (THF) serving as the one-carbon carrier. This reaction serves as the major source of one-carbon groups required for the biosynthesis of purines, thymidylate, methionine, and other important biomolecules. Also exhibits THF-independent aldolase activity toward beta-hydroxyamino acids, producing glycine and aldehydes, via a retro-aldol mechanism. This Synechococcus sp. (strain ATCC 27144 / PCC 6301 / SAUG 1402/1) (Anacystis nidulans) protein is Serine hydroxymethyltransferase.